Consider the following 185-residue polypeptide: Ribosome-recycling factor (185 aa).

Belongs to the RRF family.

It localises to the cytoplasm. In terms of biological role, responsible for the release of ribosomes from messenger RNA at the termination of protein biosynthesis. May increase the efficiency of translation by recycling ribosomes from one round of translation to another. In Chloroflexus aurantiacus (strain ATCC 29364 / DSM 637 / Y-400-fl), this protein is Ribosome-recycling factor.